The primary structure comprises 381 residues: Estradiol 17-beta-dehydrogenase 2 (381 aa).

Residues 4 to 24 traverse the membrane as a helical; Signal-anchor for type II membrane protein segment; it reads FASESAWLCLAAAAVLGGTLL. 83 to 112 contacts NAD(+); that stretch reads QKAVLVTGADSGFGHGLAKHLDKLGFTVFA. Position 220 (S220) interacts with substrate. Y233 serves as the catalytic Proton acceptor.

It belongs to the short-chain dehydrogenases/reductases (SDR) family. As to quaternary structure, homodimer.

Its subcellular location is the endoplasmic reticulum membrane. It catalyses the reaction 17beta-estradiol + NAD(+) = estrone + NADH + H(+). The enzyme catalyses testosterone + NAD(+) = androst-4-ene-3,17-dione + NADH + H(+). It carries out the reaction 17beta-hydroxy-5alpha-androstan-3-one + NAD(+) = 5alpha-androstan-3,17-dione + NADH + H(+). The catalysed reaction is (20S)-hydroxypregn-4-en-3-one + NAD(+) = progesterone + NADH + H(+). Its function is as follows. Catalyzes the NAD-dependent oxidation of highly active 17beta-hydroxysteroids, such as estradiol (E2), testosterone (T), and dihydrotestosterone (DHT), to their less active forms and thus regulates the biological potency of these steroids. Oxidizes estradiol to estrone, testosterone to androstenedione, and dihydrotestosterone to 5alpha-androstan-3,17-dione. Also has 20-alpha-HSD activity. The chain is Estradiol 17-beta-dehydrogenase 2 (Hsd17b2) from Mus musculus (Mouse).